The chain runs to 197 residues: Holliday junction branch migration complex subunit RuvA (197 aa).

A domain I region spans residues 1 to 64 (MIGRISGLLL…EDAHLLFGFA (64 aa)). The domain II stretch occupies residues 65 to 142 (TEGERQAFRQ…DLGVSAIPGA (78 aa)). The flexible linker stretch occupies residues 143 to 153 (AGARRPSTMGS). The segment at 153–197 (SDVLNALLSLGYNDREANWAVSQLSVDLSVSDGIRQALKFLSKEK) is domain III.

It belongs to the RuvA family. In terms of assembly, homotetramer. Forms an RuvA(8)-RuvB(12)-Holliday junction (HJ) complex. HJ DNA is sandwiched between 2 RuvA tetramers; dsDNA enters through RuvA and exits via RuvB. An RuvB hexamer assembles on each DNA strand where it exits the tetramer. Each RuvB hexamer is contacted by two RuvA subunits (via domain III) on 2 adjacent RuvB subunits; this complex drives branch migration. In the full resolvosome a probable DNA-RuvA(4)-RuvB(12)-RuvC(2) complex forms which resolves the HJ.

It is found in the cytoplasm. In terms of biological role, the RuvA-RuvB-RuvC complex processes Holliday junction (HJ) DNA during genetic recombination and DNA repair, while the RuvA-RuvB complex plays an important role in the rescue of blocked DNA replication forks via replication fork reversal (RFR). RuvA specifically binds to HJ cruciform DNA, conferring on it an open structure. The RuvB hexamer acts as an ATP-dependent pump, pulling dsDNA into and through the RuvAB complex. HJ branch migration allows RuvC to scan DNA until it finds its consensus sequence, where it cleaves and resolves the cruciform DNA. In Nitrosospira multiformis (strain ATCC 25196 / NCIMB 11849 / C 71), this protein is Holliday junction branch migration complex subunit RuvA.